The chain runs to 86 residues: Precursor of CEP4 (86 aa).

Residues 1–30 (MVSRGCSITVLFRFLIVLLVIQVHFENTKA) form the signal peptide. Positions 31–64 (ARHAPVVSWSPPEPPKDDFVWYHKINRFKNIEQD) are excised as a propeptide. Residues 63 to 86 (QDAFRPTHQGPSQGIGHKNPPGAP) form a disordered region. Hydroxyproline occurs at positions 68 and 73. Positions 80-86 (KNPPGAP) are excised as a propeptide.

Belongs to the C-terminally encoded plant signaling peptide (CEP) family. In terms of assembly, interacts with CEP receptors (e.g. CEPR1 and CEPR2). Post-translationally, the mature small signaling peptide is generated by proteolytic processing of the longer precursor. In terms of tissue distribution, expressed at low levels in flowers. Present in lateral roots, shoot apical meristem (SAM), flowers and siliques.

Its subcellular location is the secreted. The protein localises to the extracellular space. The protein resides in the apoplast. Extracellular signaling peptide that represses primary root growth rate. Promotes shoot growth and modulates leaf morphology. Regulates systemic nitrogen (N)-demand signaling. Mediates up-regulation of genes involved in N uptake and assimilation pathways. In Arabidopsis thaliana (Mouse-ear cress), this protein is Precursor of CEP4.